A 325-amino-acid chain; its full sequence is Protein FAM50B (325 aa).

Alanine 2 carries the post-translational modification N-acetylalanine. Disordered regions lie at residues 92–111 (QHLE…EQRR) and 137–160 (RRAG…DREE).

This sequence belongs to the FAM50 family. In terms of tissue distribution, widely expressed. Mostly abundant in testis and adult and fetal brain.

The polypeptide is Protein FAM50B (FAM50B) (Homo sapiens (Human)).